The following is a 157-amino-acid chain: Endoribonuclease YbeY (157 aa).

Positions 113, 117, and 123 each coordinate Zn(2+).

Belongs to the endoribonuclease YbeY family. Requires Zn(2+) as cofactor.

The protein localises to the cytoplasm. Single strand-specific metallo-endoribonuclease involved in late-stage 70S ribosome quality control and in maturation of the 3' terminus of the 16S rRNA. The sequence is that of Endoribonuclease YbeY from Ehrlichia ruminantium (strain Welgevonden).